The sequence spans 435 residues: Glutamyl-tRNA reductase (435 aa).

Substrate contacts are provided by residues 49–52 (TCNR), serine 114, 119–121 (EPQ), and glutamine 125. Catalysis depends on cysteine 50, which acts as the Nucleophile. Residue 204-209 (GAGETI) participates in NADP(+) binding.

Belongs to the glutamyl-tRNA reductase family. In terms of assembly, homodimer.

It carries out the reaction (S)-4-amino-5-oxopentanoate + tRNA(Glu) + NADP(+) = L-glutamyl-tRNA(Glu) + NADPH + H(+). It functions in the pathway porphyrin-containing compound metabolism; protoporphyrin-IX biosynthesis; 5-aminolevulinate from L-glutamyl-tRNA(Glu): step 1/2. Catalyzes the NADPH-dependent reduction of glutamyl-tRNA(Glu) to glutamate 1-semialdehyde (GSA). In Actinobacillus succinogenes (strain ATCC 55618 / DSM 22257 / CCUG 43843 / 130Z), this protein is Glutamyl-tRNA reductase.